The sequence spans 283 residues: Pantothenate synthetase (283 aa).

30–37 (MGYYHSGH) is a binding site for ATP. The active-site Proton donor is H37. Q61 serves as a coordination point for (R)-pantoate. Q61 lines the beta-alanine pocket. 147–150 (GQKD) lines the ATP pocket. Q153 provides a ligand contact to (R)-pantoate. ATP contacts are provided by residues V176 and 184–187 (MSSR).

It belongs to the pantothenate synthetase family. Homodimer.

The protein localises to the cytoplasm. The enzyme catalyses (R)-pantoate + beta-alanine + ATP = (R)-pantothenate + AMP + diphosphate + H(+). The protein operates within cofactor biosynthesis; (R)-pantothenate biosynthesis; (R)-pantothenate from (R)-pantoate and beta-alanine: step 1/1. Functionally, catalyzes the condensation of pantoate with beta-alanine in an ATP-dependent reaction via a pantoyl-adenylate intermediate. The polypeptide is Pantothenate synthetase (Nitratidesulfovibrio vulgaris (strain DSM 19637 / Miyazaki F) (Desulfovibrio vulgaris)).